Here is a 98-residue protein sequence, read N- to C-terminus: Small ribosomal subunit protein bS6 (98 aa).

This sequence belongs to the bacterial ribosomal protein bS6 family.

Functionally, binds together with bS18 to 16S ribosomal RNA. This Lactobacillus acidophilus (strain ATCC 700396 / NCK56 / N2 / NCFM) protein is Small ribosomal subunit protein bS6.